The sequence spans 352 residues: Isoflavone-7-O-methyltransferase 8 (352 aa).

Residue 118–127 (VLDPTLSGSY) coordinates substrate. Positions 196, 219, 239, 240, and 253 each coordinate S-adenosyl-L-methionine. The active-site Proton acceptor is the H257.

The protein belongs to the class I-like SAM-binding methyltransferase superfamily. Cation-independent O-methyltransferase family. COMT subfamily. As to quaternary structure, homodimer.

It catalyses the reaction a 7-hydroxyisoflavone + S-adenosyl-L-methionine = a 7-methoxyisoflavone + S-adenosyl-L-homocysteine + H(+). It functions in the pathway phytoalexin biosynthesis; medicarpin biosynthesis. Transfers a methyl group to 7-hydroxyls of the isoflavones daidzein, genistein and 6,7,4'-trihydroxyisoflavone. Can also methylate (+)6a-hydroxymaackiain with lower efficiency. The polypeptide is Isoflavone-7-O-methyltransferase 8 (Medicago sativa (Alfalfa)).